The chain runs to 245 residues: tRNA1(Val) (adenine(37)-N6)-methyltransferase (245 aa).

This sequence belongs to the methyltransferase superfamily. tRNA (adenine-N(6)-)-methyltransferase family.

The protein localises to the cytoplasm. The enzyme catalyses adenosine(37) in tRNA1(Val) + S-adenosyl-L-methionine = N(6)-methyladenosine(37) in tRNA1(Val) + S-adenosyl-L-homocysteine + H(+). In terms of biological role, specifically methylates the adenine in position 37 of tRNA(1)(Val) (anticodon cmo5UAC). The polypeptide is tRNA1(Val) (adenine(37)-N6)-methyltransferase (Citrobacter koseri (strain ATCC BAA-895 / CDC 4225-83 / SGSC4696)).